Consider the following 318-residue polypeptide: HTH-type transcriptional regulatory protein TyrR (318 aa).

The 225-residue stretch at 15 to 239 (FIVQSEAMKS…LYNTLYRACS (225 aa)) folds into the Sigma-54 factor interaction; truncated domain. ATP-binding positions include 43 to 50 (GETGSGKD) and 101 to 110 (ANKGTVLLDG). A DNA-binding region (H-T-H motif) is located at residues 292–312 (STRKLAQRLGVSHTAIANKLK).

Homodimer. In presence of tyrosine (or high concentrations of phenylalanine or tryptophan) and ATP, it self-associates to form a hexamer.

Its subcellular location is the cytoplasm. With respect to regulation, the DNA binding ability is drastically reduced in the presence of ATP. Tyrosine further reduces the binding affinity of TyrR in the presence of ATP. Functionally, transcriptional regulator of the TyrR regulon, which includes a number of genes coding for proteins involved in the biosynthesis or transport of the three aromatic amino acids, phenylalanine, tyrosine and tryptophan. These three aromatic amino acids act as effectors which bind to the TyrR protein to form an active regulatory protein. Acts by binding specifically to TyrR boxes in the promoter region of the target genes. Can efficiently repress the transcription of the aroF promoter, but lacks the ability to function as a transcriptional activator. In Haemophilus influenzae (strain ATCC 51907 / DSM 11121 / KW20 / Rd), this protein is HTH-type transcriptional regulatory protein TyrR.